The sequence spans 490 residues: Nuclear distribution protein PAC1 (490 aa).

Residues 65 to 96 adopt a coiled-coil conformation; sequence STVLRLQKKIIDLENEIHNLTNIINTTNSETN. WD repeat units lie at residues 118-157, 163-204, 205-245, 251-290, 293-327, 328-367, 388-427, and 436-487; these read QCEN…NTIP, AHTR…RTLN, GHEH…CLKS, EWCR…GVAM, GHTH…FPSI, PSEL…LIPH, GHSS…ETGS, and GHEG…NSIK.

It belongs to the WD repeat LIS1/nudF family. As to quaternary structure, self-associates. Interacts with NDL1 and dynein.

The protein resides in the cytoplasm. Its subcellular location is the cytoskeleton. It localises to the spindle pole. Functionally, positively regulates the activity of the minus-end directed microtubule motor protein dynein. Plays a central role in positioning the mitotic spindle at the bud neck during cell division. Targets cytoplasmic dynein to microtubule plus ends, thereby promoting dynein-mediated microtubule sliding along the bud cortex and consequently the movement of the mitotic spindle to the bud neck. The sequence is that of Nuclear distribution protein PAC1 from Candida tropicalis (strain ATCC MYA-3404 / T1) (Yeast).